Consider the following 381-residue polypeptide: Complement decay-accelerating factor (381 aa).

The N-terminal stretch at 1-34 (MTVARPSVPAALPLLGELPRLLLLVLLCLPAVWG) is a signal peptide. 4 consecutive Sushi domains span residues 35–96 (DCGL…FCNR), 96–160 (RSCE…FCKK), 161–222 (KSCP…ECRE), and 223–285 (IYCP…ECRG). 2 disulfide bridges follow: Cys36-Cys81 and Cys65-Cys94. Asn95 is a glycosylation site (N-linked (GlcNAc...) asparagine). 6 disulfide bridges follow: Cys98–Cys145, Cys129–Cys158, Cys163–Cys204, Cys190–Cys220, Cys225–Cys267, and Cys253–Cys283. The tract at residues 277-354 (SGPPPECRGK…PNKGSGTTSG (78 aa)) is disordered. Positions 287–309 (SLTSKVPPTVQKPTTVNVPTTEV) are enriched in polar residues. A compositionally biased stretch (low complexity) spans 310-328 (SPTSQKTTTKTTTPNAQAT). A lipid anchor (GPI-anchor amidated serine) is attached at Ser353. A propeptide spans 354 to 381 (GTTRLLSGHTCFTLTGLLGTLVTMGLLT) (removed in mature form).

It belongs to the receptors of complement activation (RCA) family. As to quaternary structure, monomer (major form) and non-disulfide-linked, covalent homodimer (minor form). Interacts with ADGRE5. (Microbial infection) Interacts with coxsackievirus A21, coxsackieviruses B1, B3 and B5 capsid proteins. In terms of assembly, (Microbial infection) Interacts with human enterovirus 70 and D68 capsid proteins. As to quaternary structure, (Microbial infection) Interacts with human echoviruses 6, 7, 11, 12, 20 and 21 capsid proteins. In terms of processing, the Ser/Thr-rich domain is heavily O-glycosylated. As to expression, expressed on the plasma membranes of all cell types that are in intimate contact with plasma complement proteins. It is also found on the surfaces of epithelial cells lining extracellular compartments, and variants of the molecule are present in body fluids and in extracellular matrix.

Its subcellular location is the cell membrane. It localises to the secreted. Functionally, this protein recognizes C4b and C3b fragments that condense with cell-surface hydroxyl or amino groups when nascent C4b and C3b are locally generated during C4 and c3 activation. Interaction of daf with cell-associated C4b and C3b polypeptides interferes with their ability to catalyze the conversion of C2 and factor B to enzymatically active C2a and Bb and thereby prevents the formation of C4b2a and C3bBb, the amplification convertases of the complement cascade. Inhibits complement activation by destabilizing and preventing the formation of C3 and C5 convertases, which prevents complement damage. Its function is as follows. (Microbial infection) Acts as a receptor for Coxsackievirus A21, coxsackieviruses B1, B3 and B5. (Microbial infection) Acts as a receptor for Human enterovirus 70 and D68. In terms of biological role, (Microbial infection) Acts as a receptor for Human echoviruses 6, 7, 11, 12, 20 and 21. This chain is Complement decay-accelerating factor (CD55), found in Homo sapiens (Human).